The chain runs to 775 residues: 1,4-alpha-glucan branching enzyme GlgB (775 aa).

Positions 1–39 (MTSVHDFATATRPATPSAAAQEPAPALPPGLDRNTLDAL) are disordered. A compositionally biased stretch (low complexity) spans 8–24 (ATATRPATPSAAAQEPA). D454 functions as the Nucleophile in the catalytic mechanism. E507 functions as the Proton donor in the catalytic mechanism.

Belongs to the glycosyl hydrolase 13 family. GlgB subfamily. In terms of assembly, monomer.

The enzyme catalyses Transfers a segment of a (1-&gt;4)-alpha-D-glucan chain to a primary hydroxy group in a similar glucan chain.. It participates in glycan biosynthesis; glycogen biosynthesis. In terms of biological role, catalyzes the formation of the alpha-1,6-glucosidic linkages in glycogen by scission of a 1,4-alpha-linked oligosaccharide from growing alpha-1,4-glucan chains and the subsequent attachment of the oligosaccharide to the alpha-1,6 position. The protein is 1,4-alpha-glucan branching enzyme GlgB of Ralstonia nicotianae (strain ATCC BAA-1114 / GMI1000) (Ralstonia solanacearum).